A 1588-amino-acid chain; its full sequence is Ubiquitin carboxyl-terminal hydrolase 54 (1588 aa).

Residue R12 is modified to Omega-N-methylarginine. The region spanning 31 to 352 (KGLSNEPGQN…QPLLLLYADP (322 aa)) is the USP domain. C42 serves as the catalytic Nucleophile. Zn(2+)-binding residues include H67, C69, C74, C77, H133, C145, C150, H153, C166, C169, C225, and C229. The Proton acceptor role is filled by H302. Basic and acidic residues-rich tracts occupy residues 380-391 (DSGHLTDSECNQ) and 424-434 (SEGETLKEKQA). 2 disordered regions span residues 380–447 (DSGH…TSRL) and 459–519 (HSRP…PTWR). S424 is subject to Phosphoserine. 2 stretches are compositionally biased toward polar residues: residues 436 to 445 (RNASKSSSTS) and 459 to 471 (HSRP…TNAA). Residues 499-512 (TESTSSEARSSSSS) are compositionally biased toward low complexity. A phosphoserine mark is found at S574, S613, and S616. Residues 601 to 616 (ESGYESSERNSSSPVS) are compositionally biased toward low complexity. A disordered region spans residues 601 to 620 (ESGYESSERNSSSPVSLDAA). A coiled-coil region spans residues 678-712 (TSKSELDELQEEVARRAQEQELRKKREKELEAAKG). 5 disordered regions span residues 801–839 (RSLQ…EQSV), 856–895 (DSEL…SPPG), 950–969 (EDNS…TTQD), 1093–1172 (TRDV…SRRR), and 1525–1562 (GSVL…SAGE). Low complexity predominate over residues 808-825 (QQQPPSQQPVQPSASLPS). A compositionally biased stretch (polar residues) spans 878 to 895 (SLVSPSPAQSVSQHSPPG). Position 1138 is a phosphoserine (S1138). The segment covering 1536–1547 (RRIDVPPDDDGR) has biased composition (basic and acidic residues).

This sequence belongs to the peptidase C19 family.

It catalyses the reaction Thiol-dependent hydrolysis of ester, thioester, amide, peptide and isopeptide bonds formed by the C-terminal Gly of ubiquitin (a 76-residue protein attached to proteins as an intracellular targeting signal).. Its function is as follows. Deubiquitinase that specifically mediates 'Lys-63'-linked deubiquitination of substrates with a polyubiquitin chain composed of at least 3 ubiquitins. Specifically recognizes ubiquitin chain in position S2 and catalyzes cleavage of polyubiquitin within 'Lys-63'-linked chains. Not able to deubiquitinate substrates with shorter ubiquitin chains. Mediates deubiquitination of PLK4, maintaining PLK4 stability by reducing its ubiquitination-mediated degradation. The chain is Ubiquitin carboxyl-terminal hydrolase 54 (Usp54) from Rattus norvegicus (Rat).